A 338-amino-acid chain; its full sequence is Clavatol oxidase claD (338 aa).

The Fe2OG dioxygenase domain maps to 193 to 299; sequence DPMSLLRLLH…RYSVVFFYDG (107 aa). Positions 222, 224, and 280 each coordinate Fe cation. R290 contributes to the 2-oxoglutarate binding site.

The protein belongs to the iron/ascorbate-dependent oxidoreductase family. It depends on Fe(2+) as a cofactor.

It carries out the reaction clavatol + 2-oxoglutarate + O2 = hydroxyclavatol + succinate + CO2. It participates in secondary metabolite biosynthesis. 2-oxoglutarate-dependent dioxygenase; part of the cla gene cluster that produces clavatol and ortho-quinone methide. The clavatol biosynthesis cluster cla and the terrestric acid cluster tra are both involved in the production of peniphenones and penilactones. The non-reducing PKS claF is responsible for the formation of clavatol from successive condensations of 3 malonyl-CoA units, presumably with a simple acetyl-CoA starter unit, and 2 methylation steps. The esterase claE probably collaborates with claF by catalyzing the hydrolysis of ACP-bound acyl intermediates to free the ACP from stalled intermediates. The clavatol oxidase claD then converts clavatol to hydroxyclavatol. Spontaneous dehydration of hydroxyclavatol leads to the accumulation of the highly active ortho-quinone methide. On the other hand, the PKS-NRPS hybrid traA is involved in the formation of crustosic acid, with the help of traB and traD. The polyketide synthase module (PKS) of traA is responsible for the synthesis of the polyketide backbone via the condensation of an acetyl-CoA starter unit with 3 malonyl-CoA units. The downstream nonribosomal peptide synthetase (NRPS) module then amidates the carboxyl end of the polyketide with L-malic acid. Because traA lacks a designated enoylreductase (ER) domain, the required activity is provided the enoyl reductase traG. Crustosic acid undergoes decarboxylation and isomerization to the terrestric acid, catalyzed by the 2-oxoglutarate-dependent dioxygenase traH. Both acids are further converted to the 2 gamma-butyrolactones (R)-5-methyltetronic acid and (S)-5-carboxylmethyltetronic acid, with involvement of the cytochrome P450 monooxygenase claJ. Spontaneous addition of the methide to these gamma-butyrolactones leads to peniphenone D and penilactone D, which undergo again stereospecific attacking by methide to give penilactones A and B. This is Clavatol oxidase claD from Penicillium crustosum (Blue mold fungus).